A 956-amino-acid polypeptide reads, in one-letter code: NKSRKRRNRESLLGAATVEPPKPIPLTWKTEKPVWVNQWPLPKQKLEALHLLANEQLEKGHIEPSFSPWNSPVFVIQKKSGKWRMLTDLRAVNAVIQPMGPLQPGLPSPAMIPKDWPLIIIDLKDCFFTIPLAEQDCEKFAFTIPAINNKEPATRFQWKVLPQGMLNSPTICQTFVGRALQPVREKFSDCYIIHCIDDILCAAETKDKLIDCYTFLQAEVANAGLAIASDKIQTSTPFHYLGMQIENRKIKPQKIEIRKDTLKTLNDFQKLLGDINWIRPTLGIPTYAMSNLFSILRGDSDLNSKRMLTPEATKEIKLVEEKIQSAQINRIDPLAPLQLLIFATAHSPTGIIIQNTDLVEWSFLPHSTVKTFTLYLDQIATLIGQTRLRIIKLCGNDPDKIVVPLTKEQVRQAFINSGAWKIGLANFVGIIDNHYPKTKIFQFLKLTTWILPKITRREPLENALTVFTDGSSNGKAAYTGPKERVIKTPYQSAQRAELVAVITVLQDFDQPINIISDSAYVVQATRDVETALIKYSMDDQLNQLFNLLQQTVRKRNFPFYITHIRAHTNLPGPLTKANEQADLLVSSALIKAQELHALTHVNAAGLKNKFDVTWKQAKDIVQHCTQCQVLHLPTQEAGVNPRGLCPNALWQMDVTHVPSFGRLSYVHVTVDTYSHFIWATCQTGESTSHVKKHLLSCFAVMGVPEKIKTDNGPGYCSKAFQKFLSQWKISHTTGIPYNSQGQAIVERTNRTLKTQLVKQKEGGDSKECTTPQMQLNLALYTLNFLNIYRNQTTTSAEQHLTGKKNSPHEGKLIWWKDNKNKTWEIGKVITWGRGFACVSPGENQLPVWIPTRHLKFYNEPIRDAKKSTSAETETSQSSTVDSQDEQNGDVRRTDEVAIHQEGRAANLGTTKEADAVSYKISREHKGDTNPREYAACSLDDCINGGKSPYACRSSCS.

In terms of domain architecture, Reverse transcriptase spans 57 to 245 (LEKGHIEPSF…TPFHYLGMQI (189 aa)). An LPQG motif is present at residues 161 to 164 (LPQG). The short motif at 195–198 (CIDD) is the YXDD element. The 131-residue stretch at 460–590 (LENALTVFTD…ADLLVSSALI (131 aa)) folds into the RNase H type-1 domain. Positions 469, 497, 517, and 582 each coordinate Mg(2+). The segment at 587–628 (SALIKAQELHALTHVNAAGLKNKFDVTWKQAKDIVQHCTQCQ) adopts an Integrase-type zinc-finger fold. Positions 596, 600, 624, and 627 each coordinate Zn(2+). An Integrase catalytic domain is found at 642–803 (RGLCPNALWQ…TSAEQHLTGK (162 aa)). A DNA-binding region (integrase-type) is located at residues 811 to 859 (KLIWWKDNKNKTWEIGKVITWGRGFACVSPGENQLPVWIPTRHLKFYNE). A disordered region spans residues 865–890 (KKSTSAETETSQSSTVDSQDEQNGDV). Residues 869 to 879 (SAETETSQSST) show a composition bias toward low complexity.

Belongs to the beta type-B retroviral polymerase family. HERV class-II K(HML-2) pol subfamily. Cleavage sites that yield the mature proteins remain to be determined.

The catalysed reaction is DNA(n) + a 2'-deoxyribonucleoside 5'-triphosphate = DNA(n+1) + diphosphate. It catalyses the reaction Endonucleolytic cleavage to 5'-phosphomonoester.. Early post-infection, the reverse transcriptase converts the viral RNA genome into double-stranded viral DNA. The RNase H domain of the reverse transcriptase performs two functions. It degrades the RNA template and specifically removes the RNA primer from the RNA/DNA hybrid. Following nuclear import, the integrase catalyzes the insertion of the linear, double-stranded viral DNA into the host cell chromosome. Endogenous Pol proteins may have kept, lost or modified their original function during evolution. The polypeptide is Endogenous retrovirus group K member 6 Pol protein (ERVK-6) (Homo sapiens (Human)).